The following is a 475-amino-acid chain: Ribulose bisphosphate carboxylase large chain (475 aa).

Positions 1–2 (MS) are excised as a propeptide. At Pro3 the chain carries N-acetylproline. Lys14 bears the N6,N6,N6-trimethyllysine mark. Residues Asn123 and Thr173 each coordinate substrate. Catalysis depends on Lys175, which acts as the Proton acceptor. Lys177 is a substrate binding site. Mg(2+) contacts are provided by Lys201, Asp203, and Glu204. An N6-carboxylysine modification is found at Lys201. The Proton acceptor role is filled by His294. Substrate contacts are provided by Arg295, His327, and Ser379.

This sequence belongs to the RuBisCO large chain family. Type I subfamily. As to quaternary structure, heterohexadecamer of 8 large chains and 8 small chains; disulfide-linked. The disulfide link is formed within the large subunit homodimers. Requires Mg(2+) as cofactor. The disulfide bond which can form in the large chain dimeric partners within the hexadecamer appears to be associated with oxidative stress and protein turnover.

It localises to the plastid. The protein resides in the chloroplast. It carries out the reaction 2 (2R)-3-phosphoglycerate + 2 H(+) = D-ribulose 1,5-bisphosphate + CO2 + H2O. The catalysed reaction is D-ribulose 1,5-bisphosphate + O2 = 2-phosphoglycolate + (2R)-3-phosphoglycerate + 2 H(+). In terms of biological role, ruBisCO catalyzes two reactions: the carboxylation of D-ribulose 1,5-bisphosphate, the primary event in carbon dioxide fixation, as well as the oxidative fragmentation of the pentose substrate in the photorespiration process. Both reactions occur simultaneously and in competition at the same active site. The chain is Ribulose bisphosphate carboxylase large chain from Chara vulgaris (Common stonewort).